Reading from the N-terminus, the 328-residue chain is Cell division protein ZipA (328 aa).

Residues 1–6 (MMQDLR) are Periplasmic-facing. Residues 7–27 (LILIVVGAIAIIALLLHGLWT) form a helical membrane-spanning segment. The Cytoplasmic segment spans residues 28–328 (SRKERSSLFR…REVLDANTIA (301 aa)). Positions 61 to 72 (GEVRVRTSHPQE) are enriched in basic and acidic residues. The tract at residues 61-183 (GEVRVRTSHP…EPVAPAPEAK (123 aa)) is disordered. Polar residues-rich tracts occupy residues 95–104 (KSAQVKTASR) and 164–174 (APQQHVESQQE).

The protein belongs to the ZipA family. As to quaternary structure, interacts with FtsZ via their C-terminal domains.

It is found in the cell inner membrane. Functionally, essential cell division protein that stabilizes the FtsZ protofilaments by cross-linking them and that serves as a cytoplasmic membrane anchor for the Z ring. Also required for the recruitment to the septal ring of downstream cell division proteins. The chain is Cell division protein ZipA from Yersinia pestis bv. Antiqua (strain Antiqua).